The following is a 122-amino-acid chain: Protein SPIRAL1-like 3 (122 aa).

Disordered regions lie at residues 1 to 78 and 96 to 122; these read MGKA…NNYF and KVHA…SGNK. The span at 32 to 61 shows a compositional bias: low complexity; it reads TMGTTTTTTTTTTTDGTGGRPITTTTTTVT. Ser73 carries the post-translational modification Phosphoserine.

The protein belongs to the SPIRAL1 family. As to expression, ubiquitous. Preferentially expressed in above-ground organs.

Its function is as follows. Acts redundantly with SPR1 in maintaining the cortical microtubules organization essential for anisotropic cell growth. In Arabidopsis thaliana (Mouse-ear cress), this protein is Protein SPIRAL1-like 3 (SP1L3).